The sequence spans 453 residues: MATKIVLVGAGSAQFGYGTLGDIFQSRALYGSEIILHDINPVALAVTEKTAKDFLAKEDLPFIVSATTDRRTALRGAEFVIISIEVGDRFALWDLDWQIPQQYGIQQVYGENGGPGGLFHSLRIIPPILDICADVADICPDAWIFNYSNPMSRICTTVHRRFPELNFVGMCHEIASLERYLPEMLNTSFDNLSLRAGGLNHFSVLLDARYKDSGKDAYADVRAKAPDYFASLPGYSDILAYTRQHGKLVDTEGSTERHALGGKDSSYPWADRTLFKEILEKFHCMPITVDSHFGEYISWAGEVSDHRGILDFYTFYRNYLGGVQPKIELKLKERVVSIMEGILTDSGYEEAAVNIPNRGFIKQLPEFIAVEVPAIIDRKGVHGIQVDIPPGIGGLLSNQIAIHDLTAEAIIAGSRDLVIQALLVDSVNNQCRAIPELVDVMISRQQPWLNYLK.

3 to 69 (TKIVLVGAGS…LPFIVSATTD (67 aa)) provides a ligand contact to NAD(+). Asn149 contributes to the substrate binding site. Residue Cys171 participates in Mn(2+) binding. His172 serves as the catalytic Proton donor. His201 is a Mn(2+) binding site.

As to quaternary structure, homotetramer. Mn(2+) is required as a cofactor. Co(2+) serves as cofactor. Requires Ca(2+) as cofactor. The cofactor is Fe(2+). It depends on Mg(2+) as a cofactor. Sr(2+) is required as a cofactor. Ni(2+) serves as cofactor. Requires NAD(+) as cofactor.

The enzyme catalyses Hydrolysis of terminal, non-reducing (1-&gt;4)-linked alpha-D-glucose residues with release of alpha-D-glucose.. It participates in glycan degradation; palatinose degradation. With respect to regulation, is inhibited by EDTA in vitro. Its function is as follows. Alpha-glucosidase with broad specificity. Hydrolyzes maltose, palatinose, maltulose, trehalose, trehalulose, turanose, leucrose, sucrose and maltitol. Is not active against alpha-galactosides, e.g. melibiose, and alpha-mannosides. Shows an obligate requirement for an O-alpha-glycosidic linkage, since it is not able to cleave beta-glycosidic bonds (cellobiose, gentiobiose, lactose, sophorose or laminaribiose). Cannot hydrolyze phosphorylated alpha-glucosides derivatives. Seems to be involved in the degradation of palatinose, a sucrose isomer that is formed as a reserve material under conditions of excess carbon availability, sequestered in a form unavailable to competitors such as fungi or the host plant, and whose consumption appears to be postponed until the preferentially metabolized carbon source (e.g. sucrose) is depleted. The protein is Alpha-glucosidase (palH) of Erwinia rhapontici (Pectobacterium rhapontici).